The following is a 344-amino-acid chain: Type VI secretion system component TssA1 (344 aa).

As to quaternary structure, homododecamer. Interacts with TssB1 and TssC1. Interacts with TssK1 and TssF1.

Core component of the H1 type VI (H1-T6SS) secretion system that plays a role in the release of toxins targeting both eukaryotic and prokaryotic species. Forms a dodecameric ring-shaped structure located at one end of the T6SS sheath. May properly attach the pre-assembled sheath onto the baseplate and/or stabilize the sheaths tubular structure. The sequence is that of Type VI secretion system component TssA1 from Pseudomonas aeruginosa (strain ATCC 15692 / DSM 22644 / CIP 104116 / JCM 14847 / LMG 12228 / 1C / PRS 101 / PAO1).